The following is a 270-amino-acid chain: Glucosamine-6-phosphate deaminase (270 aa).

Asp-72 acts as the Proton acceptor; for enolization step in catalysis. Residue Asp-141 is the For ring-opening step of the active site. The Proton acceptor; for ring-opening step role is filled by His-143. The For ring-opening step role is filled by Glu-148.

It belongs to the glucosamine/galactosamine-6-phosphate isomerase family. NagB subfamily.

The catalysed reaction is alpha-D-glucosamine 6-phosphate + H2O = beta-D-fructose 6-phosphate + NH4(+). The protein operates within amino-sugar metabolism; N-acetylneuraminate degradation; D-fructose 6-phosphate from N-acetylneuraminate: step 5/5. Allosterically activated by N-acetylglucosamine 6-phosphate (GlcNAc6P). Functionally, catalyzes the reversible isomerization-deamination of glucosamine 6-phosphate (GlcN6P) to form fructose 6-phosphate (Fru6P) and ammonium ion. This Parabacteroides distasonis (strain ATCC 8503 / DSM 20701 / CIP 104284 / JCM 5825 / NCTC 11152) protein is Glucosamine-6-phosphate deaminase.